Here is a 453-residue protein sequence, read N- to C-terminus: Ribosome biogenesis protein SSF2 (453 aa).

Over residues 1–11 the composition is skewed to basic residues; sequence MAKRRQKKRTH. Disordered stretches follow at residues 1–22, 275–327, and 373–453; these read MAKR…ERDI, KAKH…KAIK, and AKMR…SEVE. In terms of domain architecture, Brix spans 26-348; sequence MVIRVGQTSL…LVKIEDGICS (323 aa). The span at 373–398 shows a compositional bias: basic and acidic residues; sequence AKMRLKEQRRKEQEENIAKKKAVKDA. Basic residues predominate over residues 399–409; sequence KKQRKLERRKA. The segment covering 440–453 has biased composition (acidic residues); sequence VPEDLDSDLFSEVE.

In terms of assembly, part of a complex that includes BRX1, RPF1, RPF2 and SSF1 or SSF2.

Its subcellular location is the nucleus. The protein resides in the nucleolus. Functionally, required for biogenesis of the 60S ribosomal subunit. This chain is Ribosome biogenesis protein SSF2 (SSF2), found in Saccharomyces cerevisiae (strain ATCC 204508 / S288c) (Baker's yeast).